Reading from the N-terminus, the 189-residue chain is Probable RNA 2'-phosphotransferase (189 aa).

This sequence belongs to the KptA/TPT1 family.

Removes the 2'-phosphate from RNA via an intermediate in which the phosphate is ADP-ribosylated by NAD followed by a presumed transesterification to release the RNA and generate ADP-ribose 1''-2''-cyclic phosphate (APPR&gt;P). May function as an ADP-ribosylase. In Streptomyces griseus subsp. griseus (strain JCM 4626 / CBS 651.72 / NBRC 13350 / KCC S-0626 / ISP 5235), this protein is Probable RNA 2'-phosphotransferase.